We begin with the raw amino-acid sequence, 533 residues long: Heterogeneous nuclear ribonucleoprotein Q (533 aa).

Position 2 is an N-acetylalanine (Ala-2). Ser-69 is subject to Phosphoserine. 3 consecutive RRM domains span residues 72-151 (TEIF…ISVA), 153-235 (NRLF…WADP), and 248-318 (KVLF…FAKP). Lys-78 is covalently cross-linked (Glycyl lysine isopeptide (Lys-Gly) (interchain with G-Cter in SUMO2)). Residue Lys-131 is modified to N6-acetyllysine. The residue at position 273 (Lys-273) is an N6-acetyllysine. At Tyr-283 the chain carries Phosphotyrosine. Positions 310–471 (NIEIVFAKPP…GARGGRGGNV (162 aa)) are interaction with APOBEC1. Arg-354 is modified (asymmetric dimethylarginine; by PRMT1; alternate). At Arg-354 the chain carries Omega-N-methylarginine; by PRMT1; alternate. Tandem repeats lie at residues 358–360 (RGG), 361–363 (RGG), 370–374 (YYGYE), 379–382 (YYGY), 388–390 (RGG), and 395–398 (YYGY). The tract at residues 358 to 469 (RGGRGGYGYP…VRGARGGRGG (112 aa)) is 8 X 3 AA repeats of R-G-G. A 3 X 4 AA repeats of Y-Y-G-Y region spans residues 370–398 (YYGYEDYYDYYGYDYHNYRGGYEDPYYGY). Arg-406 is modified (omega-N-methylarginine; by PRMT1). The disordered stretch occupies residues 407–533 (GRGGRGARGA…YQDTFGQQWK (127 aa)). Residues 408–410 (RGG) form a 1-4 repeat. Low complexity predominate over residues 414 to 432 (RGAAPSRGRGAAPPRGRAG). Arg-420 carries the post-translational modification Asymmetric dimethylarginine; by PRMT1. Residue Arg-428 is modified to Asymmetric dimethylarginine; by PRMT1; alternate. Arg-428 is subject to Omega-N-methylarginine; by PRMT1; alternate. The interval 428-459 (RGRAGYSQRGGPGSARGVRGARGGAQQQRGRG) is interaction with SMN. Arg-436 is subject to Asymmetric dimethylarginine; alternate. The residue at position 436 (Arg-436) is an Omega-N-methylarginine; alternate. The stretch at 436 to 438 (RGG) is one 1-5 repeat. An asymmetric dimethylarginine; by PRMT1; alternate mark is found at Arg-446 and Arg-449. An omega-N-methylarginine; by PRMT1; alternate mark is found at Arg-446 and Arg-449. 3 tandem repeats follow at residues 449 to 451 (RGG), 464 to 466 (RGG), and 467 to 469 (RGG). The span at 460–472 (VRGARGGRGGNVG) shows a compositional bias: gly residues. The Bipartite nuclear localization signal signature appears at 474–488 (KRKADGYNQPDSKRR). Residues 490–505 (TNNQNWGSQPIAQQPL) show a composition bias toward polar residues. Position 497 is a phosphoserine (Ser-497). A Glycyl lysine isopeptide (Lys-Gly) (interchain with G-Cter in SUMO2) cross-link involves residue Lys-517.

Identified in a histone pre-mRNA complex, at least composed of ERI1, LSM11, SLBP, SNRPB, SYNCRIP and YBX1. Identified in the spliceosome C complex. Component of the coding region determinant (CRD)-mediated complex, composed of DHX9, HNRNPU, IGF2BP1, SYNCRIP and YBX1. Identified in a mRNP complex, at least composed of DHX9, DDX3X, ELAVL1, HNRNPU, IGF2BP1, ILF3, PABPC1, PCBP2, PTBP2, STAU1, STAU2, SYNCRIP and YBX1. Identified in a mRNP granule complex, at least composed of ACTB, ACTN4, DHX9, ERG, HNRNPA1, HNRNPA2B1, HNRNPAB, HNRNPD, HNRNPL, HNRNPR, HNRNPU, HSPA1, HSPA8, IGF2BP1, ILF2, ILF3, NCBP1, NCL, PABPC1, PABPC4, PABPN1, RPLP0, RPS3, RPS3A, RPS4X, RPS8, RPS9, SYNCRIP, YBX1 and untranslated mRNAs. Component of the APOB mRNA editosome. Interacts with APOBEC1 and A1CF. Part of a complex associated with the FOS mCRD domain and consisting of PABPC1, PAIP1, CSDE1/UNR, HNRPD and SYNCRIP. Interacts with HNRPR, SMN, POLR2A hyperphosphorylated C-terminal domain, minute virus of mice (MVM) NS1 protein and through its C-terminal domain with SYT7, SYT8 and SYT9. The non-phosphorylated and phosphorylated forms are colocalized with PAIP1 in polysomes. Interacts with GTPBP1. Interacts with HABP4. Post-translationally, phosphorylated on tyrosine. The membrane-bound form found in microsomes is phosphorylated in vitro by insulin receptor tyrosine kinase (INSR). Phosphorylation is inhibited upon binding to RNA, whereas the cytoplasmic form is poorly phosphorylated.

Its subcellular location is the nucleus. The protein resides in the nucleoplasm. It localises to the cytoplasm. The protein localises to the microsome. Its function is as follows. Heterogenous nuclear ribonucleoprotein (hnRNP) implicated in mRNA processing mechanisms. Component of the CRD-mediated complex that promotes MYC mRNA stability. Is associated in vitro with pre-mRNA, splicing intermediates and mature mRNA protein complexes. Binds to apoB mRNA AU-rich sequences. Part of the APOB mRNA editosome complex and may modulate the postranscriptional C to U RNA-editing of the APOB mRNA through either by binding to A1CF (APOBEC1 complementation factor), to APOBEC1 or to RNA itself. May be involved in translationally coupled mRNA turnover. Implicated with other RNA-binding proteins in the cytoplasmic deadenylation/translational and decay interplay of the FOS mRNA mediated by the major coding-region determinant of instability (mCRD) domain. Interacts in vitro preferentially with poly(A) and poly(U) RNA sequences. May be involved in cytoplasmic vesicle-based mRNA transport through interaction with synaptotagmins. The polypeptide is Heterogeneous nuclear ribonucleoprotein Q (Syncrip) (Rattus norvegicus (Rat)).